The chain runs to 168 residues: 3-hydroxyacyl-[acyl-carrier-protein] dehydratase FabZ (168 aa).

Histidine 54 is an active-site residue.

It belongs to the thioester dehydratase family. FabZ subfamily.

It localises to the cytoplasm. It catalyses the reaction a (3R)-hydroxyacyl-[ACP] = a (2E)-enoyl-[ACP] + H2O. In terms of biological role, involved in unsaturated fatty acids biosynthesis. Catalyzes the dehydration of short chain beta-hydroxyacyl-ACPs and long chain saturated and unsaturated beta-hydroxyacyl-ACPs. This Yersinia enterocolitica serotype O:8 / biotype 1B (strain NCTC 13174 / 8081) protein is 3-hydroxyacyl-[acyl-carrier-protein] dehydratase FabZ.